Here is a 189-residue protein sequence, read N- to C-terminus: Myb-like protein T (189 aa).

The Myb-like domain maps to 121–172 (NWSPDEQKALMVEVSTLGNKSEINWFFISQQLFLKGISRNARECQRKHESIQ).

The chain is Myb-like protein T (mybT) from Dictyostelium discoideum (Social amoeba).